A 438-amino-acid chain; its full sequence is Chromosomal replication initiator protein DnaA (438 aa).

The tract at residues 1–68 (MKDNILSALK…VVKESLGKDA (68 aa)) is domain I, interacts with DnaA modulators. The interval 68-98 (ATFEIVYKEIDITQENEEKGPLVRKRPLLIT) is domain II. Residues 99–314 (PLNPKYTFEN…GAILKLIAYK (216 aa)) are domain III, AAA+ region. Residues glycine 142, glycine 144, lysine 145, and threonine 146 each coordinate ATP. The segment at 315–438 (NLYGSLNLSI…TKNFAQGESI (124 aa)) is domain IV, binds dsDNA.

It belongs to the DnaA family. In terms of assembly, oligomerizes as a right-handed, spiral filament on DNA at oriC.

Its subcellular location is the cytoplasm. Functionally, plays an essential role in the initiation and regulation of chromosomal replication. ATP-DnaA binds to the origin of replication (oriC) to initiate formation of the DNA replication initiation complex once per cell cycle. Binds the DnaA box (a 9 base pair repeat at the origin) and separates the double-stranded (ds)DNA. Forms a right-handed helical filament on oriC DNA; dsDNA binds to the exterior of the filament while single-stranded (ss)DNA is stabiized in the filament's interior. The ATP-DnaA-oriC complex binds and stabilizes one strand of the AT-rich DNA unwinding element (DUE), permitting loading of DNA polymerase. After initiation quickly degrades to an ADP-DnaA complex that is not apt for DNA replication. Binds acidic phospholipids. This Thermosipho africanus (strain TCF52B) protein is Chromosomal replication initiator protein DnaA.